Consider the following 471-residue polypeptide: MPN domain-containing protein (471 aa).

The segment covering 1–10 (MAAPEPLSPA) has biased composition (low complexity). A disordered region spans residues 1–63 (MAAPEPLSPA…GGGGAGAGGC (63 aa)). A2 carries the N-acetylalanine modification. At S8 the chain carries Phosphoserine. Over residues 16–29 (EAPEEDEDEAEAED) the composition is skewed to acidic residues. A compositionally biased stretch (gly residues) spans 36-63 (GAGGGRSGGGGSSVSGGGGGGGAGAGGC). The RAMA domain occupies 71 to 166 (TRRAVTLRVL…KYKATWLRLH (96 aa)). 3 residues coordinate DNA: S123, S125, and W145. The segment at 170-229 (TPATAADESPASEGEEEELLMEEEEEDVLAGVSAEDKSRRPLGKSPSEPAHPEATTPGKR) is disordered. S178 and S181 each carry phosphoserine. The span at 182–197 (EGEEEELLMEEEEEDV) shows a compositional bias: acidic residues. Positions 272 to 407 (VAVSSNVLFL…PESKISPFWV (136 aa)) constitute an MPN domain. H349, H351, and D362 together coordinate Zn(2+). The short motif at 349 to 362 (HSHPHSPALPSLQD) is the JAMM motif element.

It belongs to the peptidase M67 family. Monomer. Mainly monomoric, but when binds to dsDNA, forms homotetramer assembled into two homodimers. May interact with histones; this interaction is facilitated by dsDNA binding. In terms of processing, degraded following binding to N(6)-methyladenosine methylated DNA (m6A).

Probable protease. Acts as a sensor of N(6)-methyladenosine methylation on DNA (m6A): recognizes and binds m6A DNA, leading to its degradation. Binds only double strand DNA (dsDNA) in a sequence-independent manner. The sequence is that of MPN domain-containing protein from Homo sapiens (Human).